Here is a 746-residue protein sequence, read N- to C-terminus: Ribosome biogenesis protein BOP1 (746 aa).

Residues 1–116 form a disordered region; that stretch reads MAGSRGAGRT…PCPRTEMASA (116 aa). A compositionally biased stretch (low complexity) spans 43 to 65; the sequence is SHSTGSDSGVSDSEESVFSGLED. Acidic residues predominate over residues 66 to 87; the sequence is SGSDSSEDDDEGDEEGEDGALD. Basic and acidic residues predominate over residues 88 to 99; sequence DEGHSGIKKTTE. The residue at position 106 (Thr-106) is a Phosphothreonine. Tyr-122 is subject to Phosphotyrosine. A phosphoserine mark is found at Ser-126 and Ser-127. The interval 265 to 427 is sufficient for nucleolar localization; that stretch reads MGWIQPRRPR…CLSVSPGGQW (163 aa). 7 WD repeats span residues 411–450, 452–492, 532–576, 577–615, 618–657, 661–700, and 716–746; these read GHSD…CVRT, PVGG…RLVA, CHGK…SPFR, RSHG…LTKK, PNCK…KPYR, HHKK…DLLQ, and TRDL…RLFT.

It belongs to the WD repeat BOP1/ERB1 family. Component of the PeBoW complex, composed of BOP1, PES1 and WDR12. The complex is held together by BOP1, which interacts with PES1 via its N-terminal domain and with WDR12 via a high-affinity interaction between the seven-bladed beta-propeller domains of the 2 proteins. The NOP7 complex associates with the 66S pre-ribosome. The PeBoW complex associates with DDX27, BOP1 interacts directly with DDX27.

The protein resides in the nucleus. Its subcellular location is the nucleolus. It localises to the nucleoplasm. In terms of biological role, component of the PeBoW complex, which is required for maturation of 28S and 5.8S ribosomal RNAs and formation of the 60S ribosome. The chain is Ribosome biogenesis protein BOP1 from Homo sapiens (Human).